Consider the following 284-residue polypeptide: Bifunctional protein FolD (284 aa).

Residues 166 to 168 and I232 contribute to the NADP(+) site; that span reads GAS.

Belongs to the tetrahydrofolate dehydrogenase/cyclohydrolase family. As to quaternary structure, homodimer.

The enzyme catalyses (6R)-5,10-methylene-5,6,7,8-tetrahydrofolate + NADP(+) = (6R)-5,10-methenyltetrahydrofolate + NADPH. It catalyses the reaction (6R)-5,10-methenyltetrahydrofolate + H2O = (6R)-10-formyltetrahydrofolate + H(+). The protein operates within one-carbon metabolism; tetrahydrofolate interconversion. Functionally, catalyzes the oxidation of 5,10-methylenetetrahydrofolate to 5,10-methenyltetrahydrofolate and then the hydrolysis of 5,10-methenyltetrahydrofolate to 10-formyltetrahydrofolate. The protein is Bifunctional protein FolD of Shewanella baltica (strain OS223).